The sequence spans 136 residues: Large ribosomal subunit protein eL27 (136 aa).

The 36-residue stretch at 5 to 40 (MKPGKVVMVLAGRYAGRKAVIVKNIDDGTADRPYSH) folds into the KOW domain.

Belongs to the eukaryotic ribosomal protein eL27 family. As to quaternary structure, component of the large ribosomal subunit.

It localises to the cytoplasm. The protein resides in the cytosol. The protein localises to the rough endoplasmic reticulum. In terms of biological role, component of the large ribosomal subunit. In Ictalurus punctatus (Channel catfish), this protein is Large ribosomal subunit protein eL27 (rpl27).